Reading from the N-terminus, the 81-residue chain is RBAK downstream neighbor protein (81 aa).

An N-terminal signal peptide occupies residues 1 to 22; the sequence is MWPPLLLLLLLLPAAPVPTAKA.

It is found in the secreted. This chain is RBAK downstream neighbor protein (RBAKDN), found in Homo sapiens (Human).